We begin with the raw amino-acid sequence, 516 residues long: Methionine--tRNA ligase (516 aa).

The 'HIGH' region motif lies at 13–23; sequence FYPNGKPHIGH. Positions 299–303 match the 'KMSKS' region motif; it reads KMSKS. Position 302 (K302) interacts with ATP.

This sequence belongs to the class-I aminoacyl-tRNA synthetase family. MetG type 2B subfamily. Monomer.

The protein localises to the cytoplasm. It carries out the reaction tRNA(Met) + L-methionine + ATP = L-methionyl-tRNA(Met) + AMP + diphosphate. Functionally, is required not only for elongation of protein synthesis but also for the initiation of all mRNA translation through initiator tRNA(fMet) aminoacylation. The protein is Methionine--tRNA ligase of Mesorhizobium japonicum (strain LMG 29417 / CECT 9101 / MAFF 303099) (Mesorhizobium loti (strain MAFF 303099)).